The sequence spans 275 residues: NH(3)-dependent NAD(+) synthetase (275 aa).

Residue 46 to 53 (GISGGQDS) participates in ATP binding. A Mg(2+)-binding site is contributed by Asp52. Arg140 lines the deamido-NAD(+) pocket. Thr160 provides a ligand contact to ATP. Glu165 lines the Mg(2+) pocket. Lys173 and Asp180 together coordinate deamido-NAD(+). 2 residues coordinate ATP: Lys189 and Thr211. Residue 260 to 261 (HK) coordinates deamido-NAD(+).

This sequence belongs to the NAD synthetase family. Homodimer.

The enzyme catalyses deamido-NAD(+) + NH4(+) + ATP = AMP + diphosphate + NAD(+) + H(+). The protein operates within cofactor biosynthesis; NAD(+) biosynthesis; NAD(+) from deamido-NAD(+) (ammonia route): step 1/1. Catalyzes the ATP-dependent amidation of deamido-NAD to form NAD. Uses ammonia as a nitrogen source. The polypeptide is NH(3)-dependent NAD(+) synthetase (Salmonella arizonae (strain ATCC BAA-731 / CDC346-86 / RSK2980)).